The sequence spans 199 residues: MTTLGVTGGIGSGKTTVCGFLEEKGARVFYADLEAKRLMQENADVRAAIVEAFGAAAYHEDDTLNREYLAEQVFGEAGRVERLNGIVHPHVFDAFEAAKERAADEGVSLLVHEAALLFEAGGDEHVDITAAVVAPEADRIAWVTARDDVSSGQVRARMQHQLSQEELRERADHVLENDGTLNDLRRKSAELYWAVTGGQ.

The region spanning 3-199 is the DPCK domain; that stretch reads TLGVTGGIGS…ELYWAVTGGQ (197 aa). 11 to 16 contacts ATP; it reads GSGKTT.

The protein belongs to the CoaE family.

Its subcellular location is the cytoplasm. It catalyses the reaction 3'-dephospho-CoA + ATP = ADP + CoA + H(+). It participates in cofactor biosynthesis; coenzyme A biosynthesis; CoA from (R)-pantothenate: step 5/5. Catalyzes the phosphorylation of the 3'-hydroxyl group of dephosphocoenzyme A to form coenzyme A. The polypeptide is Dephospho-CoA kinase (Salinibacter ruber (strain DSM 13855 / M31)).